Consider the following 128-residue polypeptide: Probable cystatin-15 (128 aa).

Positions 1 to 20 (MFWKLPLLLGLLALGPHVCS) are cleaved as a signal peptide. The cysteines at positions 82 and 92 are disulfide-linked. Asn104 carries N-linked (GlcNAc...) asparagine glycosylation. Residues Cys105 and Cys125 are joined by a disulfide bond.

It belongs to the cystatin family.

The protein resides in the secreted. This Bos taurus (Bovine) protein is Probable cystatin-15.